A 420-amino-acid polypeptide reads, in one-letter code: Nucleobindin-2 (420 aa).

The first 24 residues, 1–24, serve as a signal peptide directing secretion; the sequence is MRWRTILLQYCFLLITCLLTALEA. Residues 171-223 mediate DNA binding; the sequence is KTRHEEFKKYEMMKEHERREYLKTLNEEKRKEEESKFEEMKKKHENHPKVNHP. A compositionally biased stretch (basic and acidic residues) spans 195–212; that stretch reads LNEEKRKEEESKFEEMKK. A disordered region spans residues 195–225; the sequence is LNEEKRKEEESKFEEMKKKHENHPKVNHPGS. Residues 213-420 are binds to necdin; that stretch reads KHENHPKVNH…AGELKFEPHI (208 aa). EF-hand domains follow at residues 241 to 276 and 293 to 328; these read PNDF…ELEK and ERLR…KEFL. Residues Asp-254 and Asn-256 each coordinate Ca(2+). Ser-257 bears the Phosphoserine mark. Asp-258, Glu-265, Asp-306, Asn-308, Asp-310, and Glu-317 together coordinate Ca(2+). The GBA motif lies at 304–334; the sequence is EVDTNKDRLVTLEEFLKATEKKEFLEPDSWE. Residue Ser-332 is modified to Phosphoserine. A disordered region spans residues 398-420; sequence QKKLQQGIPPSGPAGELKFEPHI.

It belongs to the nucleobindin family. As to quaternary structure, interacts (via GBA motif) with guanine nucleotide-binding protein G(i) alpha subunit GNAI3. Preferentially interacts with inactive rather than active GNAI3. Interaction with GNAI3 is inhibited when NUCB2 binds calcium, probably due to a conformational change which renders the GBA motif inaccessible. Binds to the postmitotic growth suppressor NDN; coexpression abolishes NUCB2 secretion. Interacts with MC4R. In terms of tissue distribution, predominantly expressed in spleen, testis and normal stomach.

The protein localises to the golgi apparatus. It is found in the membrane. Its subcellular location is the cytoplasm. The protein resides in the secreted. It localises to the endoplasmic reticulum. The protein localises to the nucleus envelope. In terms of biological role, calcium-binding protein which may have a role in calcium homeostasis. Acts as a non-receptor guanine nucleotide exchange factor which binds to and activates guanine nucleotide-binding protein (G-protein) alpha subunit GNAI3. Functionally, anorexigenic peptide, seems to play an important role in hypothalamic pathways regulating food intake and energy homeostasis, acting in a leptin-independent manner. May also exert hypertensive roles and modulate blood pressure through directly acting on peripheral arterial resistance. In intestinal epithelial cells, plays a role in the inhibition of hepatic glucose production via MC4R receptor leading to increased cyclic adenosine monophosphate (cAMP) levels and glucagon-like peptide 1 (GLP-1) secretion. The polypeptide is Nucleobindin-2 (Homo sapiens (Human)).